Reading from the N-terminus, the 135-residue chain is Protein PsiE homolog (135 aa).

4 consecutive transmembrane segments (helical) span residues 20–40, 54–74, 82–102, and 107–127; these read VGLI…TFHL, YMLI…ALIV, HFPL…LIIV, and PIDT…LYLA.

Belongs to the PsiE family.

It localises to the cell inner membrane. This is Protein PsiE homolog from Yersinia enterocolitica serotype O:8 / biotype 1B (strain NCTC 13174 / 8081).